Here is a 344-residue protein sequence, read N- to C-terminus: Palmitoyltransferase ZDHHC4 (344 aa).

Over Met1–Asp2 the chain is Lumenal. A helical transmembrane segment spans residues Phe3–Val23. Residues Cys24–Thr67 are Cytoplasmic-facing. The chain crosses the membrane as a helical span at residues Phe68–Phe88. The Lumenal segment spans residues Gly89–His99. A helical membrane pass occupies residues Tyr100 to Gly120. Residues Thr121–Arg192 are Cytoplasmic-facing. Residues Val149 to Leu199 enclose the DHHC domain. The active-site S-palmitoyl cysteine intermediate is Cys179. Residues Tyr193–Thr213 form a helical membrane-spanning segment. The Lumenal portion of the chain corresponds to Thr214–Arg255. The chain crosses the membrane as a helical span at residues Ile256 to Phe276. Topologically, residues Val277–Glu344 are cytoplasmic. Residues Lys341–Glu344 carry the Di-lysine motif motif.

Belongs to the DHHC palmitoyltransferase family. In terms of assembly, interacts with CPT1A.

It is found in the endoplasmic reticulum membrane. The protein localises to the golgi apparatus membrane. The protein resides in the cell membrane. It carries out the reaction L-cysteinyl-[protein] + hexadecanoyl-CoA = S-hexadecanoyl-L-cysteinyl-[protein] + CoA. In terms of biological role, palmitoyltransferase that catalyzes the addition of palmitate onto protein substrates including the D(2) dopamine receptor DRD2, GSK3B or MAVS. Mediates GSK3B palmitoylation to prevent its AKT1-mediated phosphorylation leading to activation of the STAT3 signaling pathway. Also catalyzes MAVS palmitoylation which promotes its stabilization and activation by inhibiting 'Lys-48'- but facilitating 'Lys-63'-linked ubiquitination. This chain is Palmitoyltransferase ZDHHC4, found in Homo sapiens (Human).